The sequence spans 187 residues: Probable chemoreceptor glutamine deamidase CheD (187 aa).

The segment at 164 to 187 (APQDVRRPTPPPMPAVASGDVDLF) is disordered.

This sequence belongs to the CheD family.

It catalyses the reaction L-glutaminyl-[protein] + H2O = L-glutamyl-[protein] + NH4(+). Its function is as follows. Probably deamidates glutamine residues to glutamate on methyl-accepting chemotaxis receptors (MCPs), playing an important role in chemotaxis. The polypeptide is Probable chemoreceptor glutamine deamidase CheD (Caulobacter vibrioides (strain ATCC 19089 / CIP 103742 / CB 15) (Caulobacter crescentus)).